Reading from the N-terminus, the 192-residue chain is Ribosome maturation factor RimM (192 aa).

Positions 116–192 constitute a PRC barrel domain; that stretch reads PGEYYWVDLI…RIIVDWQPDY (77 aa).

It belongs to the RimM family. Binds ribosomal protein uS19.

The protein resides in the cytoplasm. In terms of biological role, an accessory protein needed during the final step in the assembly of 30S ribosomal subunit, possibly for assembly of the head region. Essential for efficient processing of 16S rRNA. May be needed both before and after RbfA during the maturation of 16S rRNA. It has affinity for free ribosomal 30S subunits but not for 70S ribosomes. In Verminephrobacter eiseniae (strain EF01-2), this protein is Ribosome maturation factor RimM.